A 423-amino-acid polypeptide reads, in one-letter code: FAD-dependent monooxygenase asL6 (423 aa).

FAD-binding positions include 10 to 13 (AGVA), 34 to 35 (ER), Arg-108, Tyr-290, and Asp-312. A helical membrane pass occupies residues 371-391 (GMGMFQSKFGVGVFYVLLAII).

It belongs to the aromatic-ring hydroxylase family. It depends on FAD as a cofactor.

Its subcellular location is the membrane. It functions in the pathway secondary metabolite biosynthesis; terpenoid biosynthesis. FAD-dependent monooxygenase; part of the gene cluster that mediates the biosynthesis of xenovulene A, an unusual meroterpenoid that has potent inhibitory effects on the human gamma-aminobutyrate A (GABAA) benzodiazepine receptor. The first step of xenovulene A biosynthesis is the biosynthesis of 3-methylorcinaldehyde performed by the non-reducing polyketide synthase aspks1. The salicylate hydroxylase asL1 then catalyzes the oxidative dearomatization of 3-methylorcinaldehyde to yield a dearomatized hydroxycyclohexadione. The 2-oxoglutarate-dependent dioxygenase asL3 further catalyzes the oxidative ring expansion to provide the first tropolone metabolite. The cytochrome P450 monooxygenase asR2 allows the synthesis of tropolone hemiacetal. In parallel, a previously unrecognised class of terpene cyclase, asR6, produces alpha-humulene from farnesylpyrophosphate (FPP). The putative Diels-Alderase asR5 probably catalyzes the formation of the tropolone-humulene skeleton by linking humulene and the polyketide moiety. Oxidative-ring contractions catalyzed by asL4 and asL6 then processively remove carbon atoms from the polyketide to yield xenovulene A. The chain is FAD-dependent monooxygenase asL6 from Sarocladium schorii (Acremonium strictum (strain IMI 501407)).